The following is a 658-amino-acid chain: Translation factor GUF1, mitochondrial (658 aa).

Residues 1 to 40 (MRGCLQTVRWLTSAWQRPRSYSPLSRAAPCRFFNVSIPRN) constitute a mitochondrion transit peptide. The 181-residue stretch at 60 to 240 (DRFRNFCIVA…TVVEQIPAPV (181 aa)) folds into the tr-type G domain. GTP-binding positions include 69–76 (AHVDHGKS), 133–137 (DTPGH), and 187–190 (NKVD).

Belongs to the TRAFAC class translation factor GTPase superfamily. Classic translation factor GTPase family. LepA subfamily.

It localises to the mitochondrion inner membrane. The catalysed reaction is GTP + H2O = GDP + phosphate + H(+). Functionally, promotes mitochondrial protein synthesis. May act as a fidelity factor of the translation reaction, by catalyzing a one-codon backward translocation of tRNAs on improperly translocated ribosomes. Binds to mitochondrial ribosomes in a GTP-dependent manner. The chain is Translation factor GUF1, mitochondrial from Paracoccidioides lutzii (strain ATCC MYA-826 / Pb01) (Paracoccidioides brasiliensis).